The following is a 455-amino-acid chain: Phosphomethylpyrimidine synthase (455 aa).

Substrate contacts are provided by residues asparagine 80, methionine 109, tyrosine 139, histidine 175, 195–197 (SRG), 236–239 (DSLR), and glutamate 275. Residue histidine 279 participates in Zn(2+) binding. Tyrosine 302 is a substrate binding site. Histidine 343 contacts Zn(2+). 3 residues coordinate [4Fe-4S] cluster: cysteine 423, cysteine 426, and cysteine 431.

The protein belongs to the ThiC family. [4Fe-4S] cluster is required as a cofactor.

The catalysed reaction is 5-amino-1-(5-phospho-beta-D-ribosyl)imidazole + S-adenosyl-L-methionine = 4-amino-2-methyl-5-(phosphooxymethyl)pyrimidine + CO + 5'-deoxyadenosine + formate + L-methionine + 3 H(+). It functions in the pathway cofactor biosynthesis; thiamine diphosphate biosynthesis. In terms of biological role, catalyzes the synthesis of the hydroxymethylpyrimidine phosphate (HMP-P) moiety of thiamine from aminoimidazole ribotide (AIR) in a radical S-adenosyl-L-methionine (SAM)-dependent reaction. This chain is Phosphomethylpyrimidine synthase, found in Synechococcus sp. (strain JA-2-3B'a(2-13)) (Cyanobacteria bacterium Yellowstone B-Prime).